A 354-amino-acid chain; its full sequence is Dihydroflavonol 4-reductase (354 aa).

2 residues coordinate NADP(+): lysine 44 and tyrosine 163.

Belongs to the NAD(P)-dependent epimerase/dehydratase family. Dihydroflavonol-4-reductase subfamily.

It carries out the reaction a (2R,3S,4S)-leucoanthocyanidin + NADP(+) = a (2R,3R)-dihydroflavonol + NADPH + H(+). The catalysed reaction is (2S)-flavan-4-ol + NADP(+) = (2S)-flavanone + NADPH + H(+). Its pathway is pigment biosynthesis; anthocyanin biosynthesis. In terms of biological role, bifunctional enzyme involved in flavonoid metabolism. This chain is Dihydroflavonol 4-reductase (ANT18), found in Hordeum vulgare (Barley).